Reading from the N-terminus, the 887-residue chain is MSTVPIESLLHHSYLRHNSKVNRGNRSFIPISLNLRSHFTSNKLLHSIGKSVGVSSMNKSPVAIRATSSDTAVVETAQSDDVIFKEIFPVQRIEKAEGKIYVRLKEVKEKNWELSVGCSIPGKWILHWGVSYVGDTGSEWDQPPEDMRPPGSIAIKDYAIETPLKKLSEGDSFFEVAINLNLESSVAALNFVLKDEETGAWYQHKGRDFKVPLVDDVPDNGNLIGAKKGFGALGQLSNIPLKQDKSSAETDSIEERKGLQEFYEEMPISKRVADDNSVSVTARKCPETSKNIVSIETDLPGDVTVHWGVCKNGTKKWEIPSEPYPEETSLFKNKALRTRLQRKDDGNGSFGLFSLDGKLEGLCFVLKLNENTWLNYRGEDFYVPFLTSSSSPVETEAAQVSKPKRKTDKEVSASGFTKEIITEIRNLAIDISSHKNQKTNVKEVQENILQEIEKLAAEAYSIFRSTTPAFSEEGVLEAEADKPDIKISSGTGSGFEILCQGFNWESNKSGRWYLELQEKADELASLGFTVLWLPPPTESVSPEGYMPKDLYNLNSRYGTIDELKDTVKKFHKVGIKVLGDAVLNHRCAHFKNQNGVWNLFGGRLNWDDRAVVADDPHFQGRGNKSSGDNFHAAPNIDHSQDFVRKDIKEWLCWMMEEVGYDGWRLDFVRGFWGGYVKDYMDASKPYFAVGEYWDSLSYTYGEMDYNQDAHRQRIVDWINATSGAAGAFDVTTKGILHTALQKCEYWRLSDPKGKPPGVVGWWPSRAVTFIENHDTGSTQGHWRFPEGKEMQGYAYILTHPGTPAVFFDHIFSDYHSEIAALLSLRNRQKLHCRSEVNIDKSERDVYAAIIDEKVAMKIGPGHYEPPNGSQNWSVAVEGRDYKVWETS.

The N-terminal 55 residues, 1–55, are a transit peptide targeting the chloroplast; it reads MSTVPIESLLHHSYLRHNSKVNRGNRSFIPISLNLRSHFTSNKLLHSIGKSVGVS. Residues Cys499 and Cys587 are joined by a disulfide bond. Substrate-binding positions include 545-546 and 664-669; these read YM and RLDFVR. Asp666 serves as the catalytic Nucleophile. The active-site Proton donor is the Glu691. Residues Trp693, Ser695, Gln712, Lys754, 760–762, His773, Gln779, Lys857, and Trp884 contribute to the substrate site; that span reads GWW.

The protein belongs to the glycosyl hydrolase 13 family. Requires Ca(2+) as cofactor. Expressed in developing siliques.

Its subcellular location is the plastid. It localises to the chloroplast. The catalysed reaction is Endohydrolysis of (1-&gt;4)-alpha-D-glucosidic linkages in polysaccharides containing three or more (1-&gt;4)-alpha-linked D-glucose units.. With respect to regulation, redox-regulated, with the highest activity under reducing conditions. The midpoint redox potential is -329 mV. The disulfide bridge between Cys-499 and Cys-587 inhibits catalysis. Inhibited by CuCl(2) and H(2)O(2). Its function is as follows. Possesses endoamylolytic activity in vitro, but seems not required for breakdown of transitory starch in leaves. May be involved in the determination of the final structure of glucans by shortening long linear phospho-oligosaccharides in the chloroplast stroma. Can act on both soluble and insoluble glucan substrates to release small linear and branched malto-oligosaccharides. Works synergistically with beta-amylase toward efficient starch degradation. Has activity against p-nitrophenyl maltoheptaoside (BPNP-G7), amylopectin and beta-limit dextrin. Involved in stress-induced starch degradation. This Arabidopsis thaliana (Mouse-ear cress) protein is Alpha-amylase 3, chloroplastic.